The sequence spans 558 residues: Dihydroxy-acid dehydratase (558 aa).

Cysteine 50 contacts [2Fe-2S] cluster. Position 82 (aspartate 82) interacts with Mg(2+). [2Fe-2S] cluster is bound at residue cysteine 123. Residues aspartate 124 and lysine 125 each contribute to the Mg(2+) site. Position 125 is an N6-carboxylysine (lysine 125). Cysteine 195 provides a ligand contact to [2Fe-2S] cluster. Glutamate 447 serves as a coordination point for Mg(2+). The active-site Proton acceptor is serine 472.

The protein belongs to the IlvD/Edd family. In terms of assembly, homodimer. The cofactor is [2Fe-2S] cluster. Mg(2+) is required as a cofactor.

It carries out the reaction (2R)-2,3-dihydroxy-3-methylbutanoate = 3-methyl-2-oxobutanoate + H2O. The enzyme catalyses (2R,3R)-2,3-dihydroxy-3-methylpentanoate = (S)-3-methyl-2-oxopentanoate + H2O. It participates in amino-acid biosynthesis; L-isoleucine biosynthesis; L-isoleucine from 2-oxobutanoate: step 3/4. Its pathway is amino-acid biosynthesis; L-valine biosynthesis; L-valine from pyruvate: step 3/4. Its function is as follows. Functions in the biosynthesis of branched-chain amino acids. Catalyzes the dehydration of (2R,3R)-2,3-dihydroxy-3-methylpentanoate (2,3-dihydroxy-3-methylvalerate) into 2-oxo-3-methylpentanoate (2-oxo-3-methylvalerate) and of (2R)-2,3-dihydroxy-3-methylbutanoate (2,3-dihydroxyisovalerate) into 2-oxo-3-methylbutanoate (2-oxoisovalerate), the penultimate precursor to L-isoleucine and L-valine, respectively. This is Dihydroxy-acid dehydratase from Saccharolobus islandicus (strain L.S.2.15 / Lassen #1) (Sulfolobus islandicus).